Consider the following 175-residue polypeptide: Nascent polypeptide-associated complex subunit beta (175 aa).

2 disordered regions span residues 1 to 36 (MDKE…SQGD) and 129 to 175 (RQAA…EELE). One can recognise an NAC-A/B domain in the interval 34–101 (QGDDRKLQAA…GQTKELTELV (68 aa)). A compositionally biased stretch (acidic residues) spans 149–163 (EGDDEIPDLVDNFDE). Over residues 164-175 (AEVKKSDLEELE) the composition is skewed to basic and acidic residues.

The protein belongs to the NAC-beta family. In terms of assembly, part of the nascent polypeptide-associated complex (NAC), consisting of EGD2 and EGD1. NAC associates with ribosomes via EGD1.

The protein resides in the cytoplasm. It is found in the nucleus. Component of the nascent polypeptide-associated complex (NAC), a dynamic component of the ribosomal exit tunnel, protecting the emerging polypeptides from interaction with other cytoplasmic proteins to ensure appropriate nascent protein targeting. The NAC complex also promotes mitochondrial protein import by enhancing productive ribosome interactions with the outer mitochondrial membrane and blocks the inappropriate interaction of ribosomes translating non-secretory nascent polypeptides with translocation sites in the membrane of the endoplasmic reticulum. EGD1 may act as a transcription factor that exert a negative effect on the expression of several genes that are transcribed by RNA polymerase II. The chain is Nascent polypeptide-associated complex subunit beta (EGD1) from Cryptococcus neoformans var. neoformans serotype D (strain B-3501A) (Filobasidiella neoformans).